Here is a 352-residue protein sequence, read N- to C-terminus: Geranylgeranyl transferase type-1 subunit beta (352 aa).

4 PFTB repeats span residues 135 to 180 (VNKK…FILD), 187 to 228 (KESA…SLLG), 236 to 276 (FKEQ…MMID), and 283 to 325 (FASI…SFGN). Residues 213–215 (HGG) and 255–258 (RTNK) contribute to the geranylgeranyl diphosphate site. The Zn(2+) site is built by Asp261 and Cys263. 264 to 267 (YAFW) is a geranylgeranyl diphosphate binding site. His313 contributes to the Zn(2+) binding site.

Belongs to the protein prenyltransferase subunit beta family. As to quaternary structure, heterodimer of an alpha and a beta subunit. The cofactor is Zn(2+). Mg(2+) serves as cofactor.

It carries out the reaction geranylgeranyl diphosphate + L-cysteinyl-[protein] = S-geranylgeranyl-L-cysteinyl-[protein] + diphosphate. Catalyzes the transfer of a geranyl-geranyl moiety from geranyl-geranyl pyrophosphate to a cysteine at the fourth position from the C-terminus of proteins having the C-terminal sequence Cys-aliphatic-aliphatic-X. This Dictyostelium discoideum (Social amoeba) protein is Geranylgeranyl transferase type-1 subunit beta (pggt1b).